The chain runs to 251 residues: Probable transcriptional regulatory protein Swol_1435 (251 aa).

The disordered stretch occupies residues 1–23 (MAGHSKWANIKHKKARSDEKRGK).

The protein belongs to the TACO1 family.

The protein localises to the cytoplasm. The protein is Probable transcriptional regulatory protein Swol_1435 of Syntrophomonas wolfei subsp. wolfei (strain DSM 2245B / Goettingen).